The primary structure comprises 396 residues: Elongation factor Tu (396 aa).

The tr-type G domain maps to 10-206 (KPHCNIGTIG…AVDAYIPQPE (197 aa)). The interval 19-26 (GHVDHGKT) is G1. 19–26 (GHVDHGKT) serves as a coordination point for GTP. Thr-26 serves as a coordination point for Mg(2+). Residues 60–64 (GITIS) form a G2 region. The tract at residues 81-84 (DCPG) is G3. Residues 81–85 (DCPGH) and 136–139 (NKVD) each bind GTP. The G4 stretch occupies residues 136–139 (NKVD). The tract at residues 174–176 (SAL) is G5.

Belongs to the TRAFAC class translation factor GTPase superfamily. Classic translation factor GTPase family. EF-Tu/EF-1A subfamily. As to quaternary structure, monomer.

The protein resides in the cytoplasm. It catalyses the reaction GTP + H2O = GDP + phosphate + H(+). Its function is as follows. GTP hydrolase that promotes the GTP-dependent binding of aminoacyl-tRNA to the A-site of ribosomes during protein biosynthesis. This Gluconacetobacter diazotrophicus (strain ATCC 49037 / DSM 5601 / CCUG 37298 / CIP 103539 / LMG 7603 / PAl5) protein is Elongation factor Tu.